We begin with the raw amino-acid sequence, 318 residues long: V-set and immunoglobulin domain-containing protein 1 (318 aa).

The first 19 residues, 1–19 (MSFLLFITLGLSLTALSHC), serve as a signal peptide directing secretion. The Ig-like V-type domain maps to 20–131 (VQVTIQNPII…SSGQGKILLT (112 aa)). Topologically, residues 20-233 (VQVTIQNPII…TGGEGGVIAA (214 aa)) are extracellular. Intrachain disulfides connect Cys-41-Cys-114 and Cys-157-Cys-207. Residues 136 to 223 (PSVPHCSIRG…GNATCELNLH (88 aa)) form the Ig-like C2-type domain. Residues 234-254 (AVIGGLLAAAIIIAIVWFLVV) traverse the membrane as a helical segment. The Cytoplasmic segment spans residues 255–318 (KRKQKKQLPP…ANGETEEPTA (64 aa)). The disordered stretch occupies residues 261–318 (QLPPTKEMKTGGNQYMAVSGEANEPPKENLGASEPTETIQFHDHAENAANGETEEPTA).

Expressed in thymocytes.

The protein localises to the membrane. The polypeptide is V-set and immunoglobulin domain-containing protein 1 (vsig1) (Xenopus laevis (African clawed frog)).